Consider the following 231-residue polypeptide: Phosphatidylserine decarboxylase proenzyme (231 aa).

Ser200 acts as the Schiff-base intermediate with substrate; via pyruvic acid in catalysis. Ser200 carries the post-translational modification Pyruvic acid (Ser); by autocatalysis.

Belongs to the phosphatidylserine decarboxylase family. PSD-A subfamily. As to quaternary structure, heterodimer of a large membrane-associated beta subunit and a small pyruvoyl-containing alpha subunit. Pyruvate serves as cofactor. Post-translationally, is synthesized initially as an inactive proenzyme. Formation of the active enzyme involves a self-maturation process in which the active site pyruvoyl group is generated from an internal serine residue via an autocatalytic post-translational modification. Two non-identical subunits are generated from the proenzyme in this reaction, and the pyruvate is formed at the N-terminus of the alpha chain, which is derived from the carboxyl end of the proenzyme. The post-translation cleavage follows an unusual pathway, termed non-hydrolytic serinolysis, in which the side chain hydroxyl group of the serine supplies its oxygen atom to form the C-terminus of the beta chain, while the remainder of the serine residue undergoes an oxidative deamination to produce ammonia and the pyruvoyl prosthetic group on the alpha chain.

It is found in the cell membrane. The catalysed reaction is a 1,2-diacyl-sn-glycero-3-phospho-L-serine + H(+) = a 1,2-diacyl-sn-glycero-3-phosphoethanolamine + CO2. The protein operates within phospholipid metabolism; phosphatidylethanolamine biosynthesis; phosphatidylethanolamine from CDP-diacylglycerol: step 2/2. Catalyzes the formation of phosphatidylethanolamine (PtdEtn) from phosphatidylserine (PtdSer). This chain is Phosphatidylserine decarboxylase proenzyme, found in Mycobacterium tuberculosis (strain ATCC 25177 / H37Ra).